Consider the following 453-residue polypeptide: Exopolyphosphatase PRUNE1 (453 aa).

Position 1 is an N-acetylmethionine (methionine 1). Positions 28, 30, 106, and 179 each coordinate Mn(2+). A DHH motif motif is present at residues 106–108; that stretch reads DHH. An essential for homodimerization region spans residues 393–420; it reads SLISGLSQDEEDPPLPPTPMNSLVDECP. The interval 395 to 421 is disordered; it reads ISGLSQDEEDPPLPPTPMNSLVDECPL. Serine 399 is subject to Phosphoserine. A Phosphothreonine modification is found at threonine 410. Serine 414 carries the post-translational modification Phosphoserine.

It belongs to the PPase class C family. Prune subfamily. Homooligomer. Able to homodimerize via its C-terminal domain. Interacts with NME1. Interacts with GSK3; at focal adhesion complexes where paxillin and vinculin are colocalized. Interacts with alpha and beta tubulin. Mn(2+) serves as cofactor. Ubiquitously expressed. Seems to be overexpressed in aggressive sarcoma subtypes, such as leiomyosarcomas and malignant fibrous histiocytomas (MFH) as well as in the less malignant liposarcomas.

The protein localises to the cytoplasm. Its subcellular location is the nucleus. It is found in the cell junction. It localises to the focal adhesion. The catalysed reaction is diphosphate + H2O = 2 phosphate + H(+). Its activity is regulated as follows. Activated by magnesium ions and inhibited by manganese ions. Inhibited by dipyridamole, moderately sensitive to IBMX and inhibited by vinpocetine. Phosphodiesterase (PDE) that has higher activity toward cAMP than cGMP, as substrate. Plays a role in cell proliferation, migration and differentiation, and acts as a negative regulator of NME1. Plays a role in the regulation of neurogenesis. Involved in the regulation of microtubule polymerization. In Homo sapiens (Human), this protein is Exopolyphosphatase PRUNE1.